We begin with the raw amino-acid sequence, 352 residues long: 3-isopropylmalate dehydrogenase (352 aa).

Residue 71–87 coordinates NAD(+); sequence GAHDSAWNQLPRHLRPE. 4 residues coordinate substrate: Arg94, Arg104, Arg132, and Asp218. Positions 218, 242, and 246 each coordinate Mg(2+). Residue 275-287 coordinates NAD(+); sequence GSAPDIAGQGVAN.

Belongs to the isocitrate and isopropylmalate dehydrogenases family. LeuB type 1 subfamily. Homodimer. It depends on Mg(2+) as a cofactor. Mn(2+) is required as a cofactor.

It is found in the cytoplasm. The catalysed reaction is (2R,3S)-3-isopropylmalate + NAD(+) = 4-methyl-2-oxopentanoate + CO2 + NADH. Its pathway is amino-acid biosynthesis; L-leucine biosynthesis; L-leucine from 3-methyl-2-oxobutanoate: step 3/4. Functionally, catalyzes the oxidation of 3-carboxy-2-hydroxy-4-methylpentanoate (3-isopropylmalate) to 3-carboxy-4-methyl-2-oxopentanoate. The product decarboxylates to 4-methyl-2 oxopentanoate. This is 3-isopropylmalate dehydrogenase from Deinococcus radiodurans (strain ATCC 13939 / DSM 20539 / JCM 16871 / CCUG 27074 / LMG 4051 / NBRC 15346 / NCIMB 9279 / VKM B-1422 / R1).